A 67-amino-acid polypeptide reads, in one-letter code: DNA-directed RNA polymerase subunit omega (67 aa).

It belongs to the RNA polymerase subunit omega family. As to quaternary structure, the RNAP catalytic core consists of 2 alpha, 1 beta, 1 beta' and 1 omega subunit. When a sigma factor is associated with the core the holoenzyme is formed, which can initiate transcription.

The enzyme catalyses RNA(n) + a ribonucleoside 5'-triphosphate = RNA(n+1) + diphosphate. In terms of biological role, promotes RNA polymerase assembly. Latches the N- and C-terminal regions of the beta' subunit thereby facilitating its interaction with the beta and alpha subunits. In Burkholderia ambifaria (strain MC40-6), this protein is DNA-directed RNA polymerase subunit omega.